A 63-amino-acid chain; its full sequence is Sec-independent protein translocase protein TatA (63 aa).

The chain crosses the membrane as a helical span at residues 1–21 (MGSLSMWHWLIVLVIVLLLFG). The tract at residues 43–63 (MTDEDAPETAKTVDHKADETK) is disordered. The segment covering 53 to 63 (KTVDHKADETK) has biased composition (basic and acidic residues).

Belongs to the TatA/E family. In terms of assembly, the Tat system comprises two distinct complexes: a TatABC complex, containing multiple copies of TatA, TatB and TatC subunits, and a separate TatA complex, containing only TatA subunits. Substrates initially bind to the TatABC complex, which probably triggers association of the separate TatA complex to form the active translocon.

It localises to the cell inner membrane. Its function is as follows. Part of the twin-arginine translocation (Tat) system that transports large folded proteins containing a characteristic twin-arginine motif in their signal peptide across membranes. TatA could form the protein-conducting channel of the Tat system. The sequence is that of Sec-independent protein translocase protein TatA from Rhizobium etli (strain ATCC 51251 / DSM 11541 / JCM 21823 / NBRC 15573 / CFN 42).